Reading from the N-terminus, the 163-residue chain is Large ribosomal subunit protein uL10 (163 aa).

This sequence belongs to the universal ribosomal protein uL10 family. Part of the ribosomal stalk of the 50S ribosomal subunit. The N-terminus interacts with L11 and the large rRNA to form the base of the stalk. The C-terminus forms an elongated spine to which L12 dimers bind in a sequential fashion forming a multimeric L10(L12)X complex.

Its function is as follows. Forms part of the ribosomal stalk, playing a central role in the interaction of the ribosome with GTP-bound translation factors. This chain is Large ribosomal subunit protein uL10, found in Histophilus somni (strain 129Pt) (Haemophilus somnus).